A 432-amino-acid chain; its full sequence is Trigger factor (432 aa).

The PPIase FKBP-type domain occupies 161–246; it reads EDRVTIDFTG…LKKVEERGLP (86 aa).

This sequence belongs to the FKBP-type PPIase family. Tig subfamily.

The protein resides in the cytoplasm. The enzyme catalyses [protein]-peptidylproline (omega=180) = [protein]-peptidylproline (omega=0). Functionally, involved in protein export. Acts as a chaperone by maintaining the newly synthesized protein in an open conformation. Functions as a peptidyl-prolyl cis-trans isomerase. This chain is Trigger factor, found in Salmonella choleraesuis (strain SC-B67).